A 286-amino-acid chain; its full sequence is tRNA dimethylallyltransferase (286 aa).

Residues 18-21 (DSMQ) form an interaction with substrate tRNA region.

This sequence belongs to the IPP transferase family. As to quaternary structure, monomer. The cofactor is Mg(2+).

It carries out the reaction adenosine(37) in tRNA + dimethylallyl diphosphate = N(6)-dimethylallyladenosine(37) in tRNA + diphosphate. Functionally, catalyzes the transfer of a dimethylallyl group onto the adenine at position 37 in tRNAs that read codons beginning with uridine, leading to the formation of N6-(dimethylallyl)adenosine (i(6)A). This Tropheryma whipplei (strain TW08/27) (Whipple's bacillus) protein is tRNA dimethylallyltransferase.